A 515-amino-acid polypeptide reads, in one-letter code: Envelope glycoprotein (515 aa).

Positions 1–33 (MPKKRRSRRRPQPIIRWVSLTLTLLALCRPIQT) are cleaved as a signal peptide. Residues 34–435 (WRCSLSLGNQ…LGLTAWVRET (402 aa)) are Extracellular-facing. N-linked (GlcNAc...) asparagine; by host glycosylation is found at asparagine 129 and asparagine 203. The CXXC signature appears at 212 to 215 (CAIC). 3 disulfide bridges follow: cysteine 212–cysteine 215, cysteine 212–cysteine 392, and cysteine 384–cysteine 391. N-linked (GlcNAc...) asparagine; by host glycans are attached at residues asparagine 230, asparagine 251, asparagine 256, asparagine 271, and asparagine 287. The fusion peptide stretch occupies residues 304 to 324 (VAALTLGLALSVGLTGINVAV). 2 coiled-coil regions span residues 330–376 (QRLT…WLYI) and 388–420 (NEPC…DWQW). Asparagine 351 carries an N-linked (GlcNAc...) asparagine; by host glycan. Residues 365-381 (AQNRRGLDWLYIRLGFQ) are immunosuppression. Positions 384–392 (CPTINEPCC) match the CX6CC motif. Asparagine 398 is a glycosylation site (N-linked (GlcNAc...) asparagine; by host). A helical transmembrane segment spans residues 436-456 (IHSVLSLFLLALFLLFLAPCL). Cysteine 455 carries the S-palmitoyl cysteine; by host lipid modification. Over 457 to 515 (IKCLTSRLLKLLRQAPHFPEISLTPKPDSDYQALLPSAPEIYSHLSPVKPDYINLRPCP) the chain is Cytoplasmic.

As to quaternary structure, the mature envelope protein (Env) consists of a trimer of SU-TM heterodimers attached by a labile interchain disulfide bond. Specific enzymatic cleavages in vivo yield mature proteins. Envelope glycoproteins are synthesized as an inactive precursor that is N-glycosylated and processed likely by host cell furin or by a furin-like protease in the Golgi to yield the mature SU and TM proteins. The cleavage site between SU and TM requires the minimal sequence [KR]-X-[KR]-R. In terms of processing, the CXXC motif is highly conserved across a broad range of retroviral envelope proteins. It is thought to participate in the formation of a labile disulfide bond possibly with the CX6CC motif present in the transmembrane protein. Isomerization of the intersubunit disulfide bond to an SU intrachain disulfide bond is thought to occur upon receptor recognition in order to allow membrane fusion. Post-translationally, the transmembrane protein is palmitoylated.

It localises to the virion membrane. The protein resides in the host cell membrane. Its function is as follows. The surface protein (SU) attaches the virus to the host cell by binding to its receptor. This interaction triggers the refolding of the transmembrane protein (TM) and is thought to activate its fusogenic potential by unmasking its fusion peptide. Fusion occurs at the host cell plasma membrane. In terms of biological role, the transmembrane protein (TM) acts as a class I viral fusion protein. Under the current model, the protein has at least 3 conformational states: pre-fusion native state, pre-hairpin intermediate state, and post-fusion hairpin state. During viral and target cell membrane fusion, the coiled coil regions (heptad repeats) assume a trimer-of-hairpins structure, positioning the fusion peptide in close proximity to the C-terminal region of the ectodomain. The formation of this structure appears to drive apposition and subsequent fusion of viral and target cell membranes. Membranes fusion leads to delivery of the nucleocapsid into the cytoplasm. This Bovine leukemia virus (isolate American FLK) (BLV) protein is Envelope glycoprotein (env).